The primary structure comprises 1124 residues: Sodium/hydrogen exchanger 11 (1124 aa).

A run of 11 helical transmembrane segments spans residues 25–45, 52–72, 90–110, 120–140, 179–199, 224–244, 254–274, 305–325, 335–355, 372–392, and 405–425; these read LVEEKHFTTLVCFIVVLGGLL, CEVIVLTILSLSGFVIGHMAY, FSLYSYFSPLIIFMVALDVEF, VLLTGLISFSTASIIIGYVVI, IYIDLIRGESLIICSIASIFF, DILGSIIFGYWCAKIIQCILA, IILCFSMVYMTFYIVEFLGMS, IFSSVYEHLIYAFFGIVIGCG, IPFIFILFTTVNLVRLLTILL, GVVITWSGIKGVFNLLWAPDV, and MFILYVQVISLLTMGINSYVM. 2 N-linked (GlcNAc...) asparagine glycosylation sites follow: N447 and N473. 4 consecutive transmembrane segments (helical) span residues 612–632, 641–661, 674–694, and 706–726; these read TGQIINLIYIYPMIIHLWPMA, ISINYYFMFLYVLESTLKIII, LEFFILVIGIIDIFCVYFVKL, and VIMGYLRIIRFLPLFKIIVPI. Positions 642–723 are ion transport-like; that stretch reads SINYYFMFLY…IRFLPLFKII (82 aa). A nucleoside 3',5'-cyclic phosphate is bound at residue 867 to 999; the sequence is IWLEGKDVLI…EYKIWLKLAL (133 aa).

The protein belongs to the monovalent cation:proton antiporter 1 (CPA1) transporter (TC 2.A.36) family.

It localises to the membrane. Functionally, involved in pH regulation. The chain is Sodium/hydrogen exchanger 11 (SLC9C2) from Homo sapiens (Human).